Consider the following 292-residue polypeptide: NAD kinase (292 aa).

Residue Asp-73 is the Proton acceptor of the active site. NAD(+)-binding positions include 73–74 (DG), 147–148 (NE), His-158, Arg-175, Asp-177, 188–193 (TAYSLS), and Gln-247.

It belongs to the NAD kinase family. A divalent metal cation is required as a cofactor.

It is found in the cytoplasm. The enzyme catalyses NAD(+) + ATP = ADP + NADP(+) + H(+). In terms of biological role, involved in the regulation of the intracellular balance of NAD and NADP, and is a key enzyme in the biosynthesis of NADP. Catalyzes specifically the phosphorylation on 2'-hydroxyl of the adenosine moiety of NAD to yield NADP. This chain is NAD kinase, found in Shigella boydii serotype 18 (strain CDC 3083-94 / BS512).